The chain runs to 1605 residues: GTPase-activating protein pac-1 (1605 aa).

The tract at residues 1-574 is required for localization to adherens junctions; it reads MEEHHRRLHV…QRFIALFNSS (574 aa). 3 disordered regions span residues 293 to 430, 529 to 556, and 574 to 593; these read QRHP…ISTS, MRSG…LNAP, and SKTS…RSRT. Over residues 323 to 334 the composition is skewed to basic and acidic residues; that stretch reads SKEDPSEDTGHD. Composition is skewed to low complexity over residues 353–365, 420–430, and 530–552; these read RNAS…SSRS, TTSSTSSISTS, and RSGG…TSRS. Residues 599–726 form the PH domain; it reads RFALPGTILQ…WISVLQSSSE (128 aa). Composition is skewed to polar residues over residues 728–745 and 846–855; these read GIAT…TTGR and KNSQLQSPTA. Disordered regions lie at residues 728 to 752 and 846 to 942; these read GIAT…NAVS and KNSQ…AGAP. Residues 868–879 show a composition bias toward low complexity; that stretch reads SSSQTMATTSSS. Basic residues predominate over residues 908 to 917; it reads SGRKWKKSKA. Residues 928 to 941 are compositionally biased toward low complexity; it reads GSSSGSQQQGAAGA. Positions 948 to 1146 constitute a Rho-GAP domain; that stretch reads VRIADCPTGS…TLIHYNLWMF (199 aa). Disordered regions lie at residues 1152 to 1176, 1207 to 1258, 1277 to 1339, 1438 to 1533, and 1554 to 1605; these read TEDA…YGVG, EGKG…AASV, SRQT…RRKR, TSDY…ARRH, and GIRK…DELL. A compositionally biased stretch (basic residues) spans 1211-1229; it reads QKIKNMLRRNSRRDKSKSK. 2 stretches are compositionally biased toward polar residues: residues 1244-1257 and 1278-1300; these read GWTQ…SAAS and RQTV…RLDQ. Low complexity predominate over residues 1301-1312; that stretch reads SPSLESSLGSLP. The span at 1438-1453 shows a compositional bias: polar residues; that stretch reads TSDYSTTSSAPLSTNP. Over residues 1461–1476 the composition is skewed to low complexity; it reads DQPNSSSDYASSDPSP. Composition is skewed to polar residues over residues 1480 to 1493 and 1500 to 1515; these read NPST…SNLA and HATS…MSRS. Positions 1558–1575 are enriched in basic and acidic residues; sequence SSPDVSRDEVSDDEKNHQ.

Associated with the catenin-cadherin complex consisting of hmr-1, hmp-1 and hmp-2; this is mediated by interaction with picc-1.

It localises to the cytoplasm. Its subcellular location is the cell junction. It is found in the adherens junction. Functionally, GTPase-activating protein for members of the Rho subfamily including Rac1, RhoA and cdc42 and other Ras-related subfamilies including let-60. Mediates radial (inner-outer) polarity and gastrulation by excluding par-6 from contacted cell surfaces; acts by inactivating cdc42 at inner cell surfaces which limits active cdc42 to outer cell surfaces devoid of cell-cell contacts, where cdc42 can bind and recruit par-6. Required for blastomere polarization. The polypeptide is GTPase-activating protein pac-1 (pac-1) (Caenorhabditis elegans).